Here is a 507-residue protein sequence, read N- to C-terminus: ATP synthase subunit alpha, chloroplastic (507 aa).

170–177 (GDRQTGKT) is an ATP binding site. Thr-257 bears the Phosphothreonine mark.

It belongs to the ATPase alpha/beta chains family. In terms of assembly, F-type ATPases have 2 components, CF(1) - the catalytic core - and CF(0) - the membrane proton channel. CF(1) has five subunits: alpha(3), beta(3), gamma(1), delta(1), epsilon(1). CF(0) has four main subunits: a, b, b' and c.

It is found in the plastid. The protein resides in the chloroplast thylakoid membrane. The enzyme catalyses ATP + H2O + 4 H(+)(in) = ADP + phosphate + 5 H(+)(out). In terms of biological role, produces ATP from ADP in the presence of a proton gradient across the membrane. The alpha chain is a regulatory subunit. This Arabis hirsuta (Hairy rock-cress) protein is ATP synthase subunit alpha, chloroplastic.